The following is an 807-amino-acid chain: Spondin-1 (807 aa).

The first 28 residues, 1–28, serve as a signal peptide directing secretion; the sequence is MRLSPAPLKLSRTPALLALALPLAAALA. A Reelin domain is found at 29–194; it reads FSDETLDKVP…DSTFDGVTDK (166 aa). Disulfide bonds link cysteine 44/cysteine 128, cysteine 156/cysteine 182, cysteine 199/cysteine 336, cysteine 200/cysteine 340, cysteine 202/cysteine 415, cysteine 443/cysteine 480, cysteine 454/cysteine 489, cysteine 459/cysteine 494, cysteine 502/cysteine 538, cysteine 513/cysteine 517, cysteine 548/cysteine 554, cysteine 559/cysteine 595, cysteine 570/cysteine 574, cysteine 605/cysteine 610, cysteine 615/cysteine 650, cysteine 626/cysteine 630, and cysteine 660/cysteine 665. Residues 195–388 enclose the Spondin domain; it reads PILDCCACGT…LTSLDHPQSP (194 aa). Asparagine 214 carries N-linked (GlcNAc...) asparagine glycosylation. Aspartate 325, aspartate 354, and aspartate 358 together coordinate Ca(2+). 6 TSP type-1 domains span residues 442–495, 501–555, 558–611, 614–666, 668–721, and 754–806; these read TCIY…PGCS, TCTM…EECS, SCLM…PECH, PCLL…PECP, DCEL…RKCL, and GCRM…NVHP. Residue tryptophan 448 is glycosylated (C-linked (Man) tryptophan). Residue tryptophan 451 is glycosylated (C-linked (Man) tryptophan; partial). A C-linked (Man) tryptophan glycan is attached at tryptophan 507. A glycan (C-linked (Man) tryptophan; partial) is linked at tryptophan 510. Tryptophan 564 is a glycosylation site (C-linked (Man) tryptophan). Tryptophan 620 carries a C-linked (Man) tryptophan; partial glycan. Tryptophan 623 carries a C-linked (Man) tryptophan glycan. Tryptophan 674 carries C-linked (Man) tryptophan glycosylation. Residue asparagine 681 is glycosylated (N-linked (GlcNAc...) asparagine).

In terms of assembly, binds to the central extracellular domain of APP and inhibits beta-secretase cleavage of APP. In terms of tissue distribution, highest expression in lung, lower expression in brain, heart, kidney, liver and testis, and lowest expression in pancreas, skeletal muscle and ovary. Not expressed in spleen.

The protein resides in the secreted. Its subcellular location is the extracellular space. It localises to the extracellular matrix. Cell adhesion protein that promotes the attachment of spinal cord and sensory neuron cells and the outgrowth of neurites in vitro. May contribute to the growth and guidance of axons in both the spinal cord and the PNS. Major factor for vascular smooth muscle cell. The protein is Spondin-1 (SPON1) of Homo sapiens (Human).